Consider the following 128-residue polypeptide: Cytochrome c-type biogenesis protein CcmE (128 aa).

The Cytoplasmic segment spans residues 1 to 7; that stretch reads MKKKHKR. The helical; Signal-anchor for type II membrane protein transmembrane segment at 8–28 threads the bilayer; sequence LLVASGIFFFLNCIVFFILTI. The Extracellular portion of the chain corresponds to 29–128; sequence LRENISFFYT…KHDENYMPRK (100 aa). Residues H120 and Y124 each coordinate heme.

It belongs to the CcmE/CycJ family.

The protein localises to the cell membrane. Functionally, heme chaperone required for the biogenesis of c-type cytochromes. Transiently binds heme delivered by CcmC and transfers the heme to apo-cytochromes in a process facilitated by CcmF and CcmH. In Wolbachia sp. subsp. Brugia malayi (strain TRS), this protein is Cytochrome c-type biogenesis protein CcmE.